Here is a 427-residue protein sequence, read N- to C-terminus: MTEAMKITLSTQPADARWGEKATYSINNDGITLHLNGADDLGLIQRAARKIDGLGIKHVQLSGEGWDADRCWAFWQGYKAPKGTRKVEWPDLDDAQRQELDNRLMIIDWVRDTINAPAEELGPSQLAQRAVDLISNVASDRVTYRITKGEDLREQGYMGLHTVGRGSERSPVLLALDYNPTGDKEAPVYACLVGKGITFDSGGYSIKQTAFMDSMKSDMGGAATVTGALAFAITRGLNKRVKLFLCCADNLISGNAFKLGDIITYRNGKKVEVMNTDAEGRLVLADGLIDASAQKPEMIIDAATLTGAAKTALGNDYHALFSFDDALAGRLLASASQENEPFWRLPLAEFHRSQLPSNFAELNNTGSAAYPAGASTAAGFLSHFVENYQQGWLHIDCSATYRKAPVEQWSAGATGLGVRTIANLLTA.

The Mn(2+) site is built by K195 and D200. K207 is an active-site residue. D218, D277, and E279 together coordinate Mn(2+). Residue R281 is part of the active site.

It belongs to the peptidase M17 family. As to quaternary structure, homohexamer. Mn(2+) is required as a cofactor.

The protein resides in the cytoplasm. The catalysed reaction is Release of an N-terminal amino acid, Xaa, from a peptide or arylamide. Xaa is preferably Glu or Asp but may be other amino acids, including Leu, Met, His, Cys and Gln.. Functionally, probably plays an important role in intracellular peptide degradation. This Escherichia coli O157:H7 protein is Peptidase B.